The primary structure comprises 524 residues: MPVTTDPGYQGPSVHVAASLPKHDVSSSVLIVPVVSASDSDESEDRPGAVVAAAEPFLTAAAVAEIEAGLRALEATGGSDQVHRLVAPSLPVGSVLTVSLGKPRSEWPADTIRRAAGVAARSLGRAEVVITTLAELPGESGASICSAVVEGLMLGSYRFTDFRSRKTAPKDNGLRKITVLANAKDAKKQSAHGATVASAVATARDLVNTPPSHLFPAEFAKCAKTLGESAGLEVEVLDDKALQKAGYGGVIGVGQGSSRTPRLVRLIHQGSRLAKNPKNARKVALVGKGITFDTGGISIKPAASMHHMTSDMAGAAAVIATITLAAQLKLPIDVVATVPMAENMPSGTAQRPGDVLTQYGGITVEVLNTDAEGRLILADAIVRACQDNPDYLIETSTLTGAQTVALGSRIPGVMGSDKFRDRVAKTSQQVGENGWPMPLPDELKDDLKSTVADLANVSGQRFAGMLVAGAFLREFVADGVDWAHIDIAGPAYNTDSPWGYTPKGATGVPTRTMFAMLEDIANHG.

Lys288 and Asp293 together coordinate Mn(2+). Lys300 is an active-site residue. Asp311, Asp370, and Glu372 together coordinate Mn(2+). The active site involves Arg374.

Belongs to the peptidase M17 family. Requires Mn(2+) as cofactor.

The protein localises to the cytoplasm. It catalyses the reaction Release of an N-terminal amino acid, Xaa-|-Yaa-, in which Xaa is preferably Leu, but may be other amino acids including Pro although not Arg or Lys, and Yaa may be Pro. Amino acid amides and methyl esters are also readily hydrolyzed, but rates on arylamides are exceedingly low.. It carries out the reaction Release of an N-terminal amino acid, preferentially leucine, but not glutamic or aspartic acids.. Presumably involved in the processing and regular turnover of intracellular proteins. Catalyzes the removal of unsubstituted N-terminal amino acids from various peptides. The chain is Probable cytosol aminopeptidase (pepA) from Mycobacterium leprae (strain TN).